Consider the following 344-residue polypeptide: Inositol 2-dehydrogenase/D-chiro-inositol 3-dehydrogenase (344 aa).

It belongs to the Gfo/Idh/MocA family. In terms of assembly, homotetramer.

The catalysed reaction is myo-inositol + NAD(+) = scyllo-inosose + NADH + H(+). The enzyme catalyses 1D-chiro-inositol + NAD(+) = scyllo-inosine + NADH + H(+). The protein operates within polyol metabolism; myo-inositol degradation into acetyl-CoA; acetyl-CoA from myo-inositol: step 1/7. Functionally, involved in the oxidation of myo-inositol (MI) and D-chiro-inositol (DCI) to 2-keto-myo-inositol (2KMI or 2-inosose) and 1-keto-D-chiro-inositol (1KDCI), respectively. This is Inositol 2-dehydrogenase/D-chiro-inositol 3-dehydrogenase from Bacillus licheniformis (strain ATCC 14580 / DSM 13 / JCM 2505 / CCUG 7422 / NBRC 12200 / NCIMB 9375 / NCTC 10341 / NRRL NRS-1264 / Gibson 46).